Here is a 157-residue protein sequence, read N- to C-terminus: Small heat shock protein ibp (157 aa).

In terms of domain architecture, sHSP spans 35–148; it reads EKPISDTPTY…KPKKISINVP (114 aa).

It belongs to the small heat shock protein (HSP20) family.

The polypeptide is Small heat shock protein ibp (ibp) (Buchnera aphidicola subsp. Acyrthosiphon pisum (strain APS) (Acyrthosiphon pisum symbiotic bacterium)).